We begin with the raw amino-acid sequence, 250 residues long: uncharacterized protein (250 aa).

6 4Fe-4S ferredoxin-type domains span residues 38–67, 69–98, 124–153, 154–183, 191–220, and 220–249; these read KLLY…KAKV, KSAK…VIEG, KKYE…AVRR, KSIE…VERE, RDIE…QDGD, and DKVK…MWEK. Positions 47, 50, 53, 57, 78, 81, 84, 88, 133, 136, 139, 143, 163, 166, 169, 173, 200, 203, 206, 210, 229, 232, 235, and 239 each coordinate [4Fe-4S] cluster.

This is an uncharacterized protein from Methanocaldococcus jannaschii (strain ATCC 43067 / DSM 2661 / JAL-1 / JCM 10045 / NBRC 100440) (Methanococcus jannaschii).